The chain runs to 159 residues: Cyclic pyranopterin monophosphate synthase (159 aa).

Substrate-binding positions include 75–77 (LCH) and 113–114 (ME). D128 is an active-site residue.

The protein belongs to the MoaC family. Homohexamer; trimer of dimers.

It catalyses the reaction (8S)-3',8-cyclo-7,8-dihydroguanosine 5'-triphosphate = cyclic pyranopterin phosphate + diphosphate. It functions in the pathway cofactor biosynthesis; molybdopterin biosynthesis. Catalyzes the conversion of (8S)-3',8-cyclo-7,8-dihydroguanosine 5'-triphosphate to cyclic pyranopterin monophosphate (cPMP). The protein is Cyclic pyranopterin monophosphate synthase of Thiobacillus denitrificans (strain ATCC 25259 / T1).